A 117-amino-acid polypeptide reads, in one-letter code: Nitrogen regulatory protein GlnK1 (117 aa).

ADP is bound by residues threonine 32, 40-42 (GAQ), and 92-95 (GSGK). ATP is bound by residues threonine 32, 40–42 (GAQ), and 92–95 (GSGK).

This sequence belongs to the P(II) protein family. In terms of assembly, homotrimer. Interacts and forms stable complexes with the glutamine synthetase GlnA1.

The protein localises to the cytoplasm. Inhibitory effects on GlnA1 are abolished in the presence of the effector 2-oxoglutarate. Its function is as follows. Involved in the regulation of nitrogen metabolism. Regulates the activity of its targets by protein-protein interaction in response to the nitrogen status of the cell. Allows finetuning control of the glutamine synthetase GlnA1 under changing nitrogen availabilities via direct protein interaction. The chain is Nitrogen regulatory protein GlnK1 from Methanosarcina mazei (strain ATCC BAA-159 / DSM 3647 / Goe1 / Go1 / JCM 11833 / OCM 88) (Methanosarcina frisia).